The primary structure comprises 173 residues: Large ribosomal subunit protein uL16 (173 aa).

This sequence belongs to the universal ribosomal protein uL16 family.

The chain is Large ribosomal subunit protein uL16 from Methanosarcina acetivorans (strain ATCC 35395 / DSM 2834 / JCM 12185 / C2A).